Here is a 450-residue protein sequence, read N- to C-terminus: tRNA-2-methylthio-N(6)-dimethylallyladenosine synthase (450 aa).

The 118-residue stretch at 2–119 folds into the MTTase N-terminal domain; that stretch reads KKVFVKTYGC…LPDLIARRQR (118 aa). Positions 11, 48, 82, 156, 160, and 163 each coordinate [4Fe-4S] cluster. Positions 142 to 375 constitute a Radical SAM core domain; sequence RVEGPSAFVS…QATIEENVQR (234 aa). Positions 378–448 constitute a TRAM domain; that stretch reads QGMVGTVQRI…PHSLRGEIVV (71 aa).

Belongs to the methylthiotransferase family. MiaB subfamily. Monomer. Requires [4Fe-4S] cluster as cofactor.

The protein localises to the cytoplasm. It carries out the reaction N(6)-dimethylallyladenosine(37) in tRNA + (sulfur carrier)-SH + AH2 + 2 S-adenosyl-L-methionine = 2-methylsulfanyl-N(6)-dimethylallyladenosine(37) in tRNA + (sulfur carrier)-H + 5'-deoxyadenosine + L-methionine + A + S-adenosyl-L-homocysteine + 2 H(+). Catalyzes the methylthiolation of N6-(dimethylallyl)adenosine (i(6)A), leading to the formation of 2-methylthio-N6-(dimethylallyl)adenosine (ms(2)i(6)A) at position 37 in tRNAs that read codons beginning with uridine. This is tRNA-2-methylthio-N(6)-dimethylallyladenosine synthase from Cupriavidus taiwanensis (strain DSM 17343 / BCRC 17206 / CCUG 44338 / CIP 107171 / LMG 19424 / R1) (Ralstonia taiwanensis (strain LMG 19424)).